Consider the following 446-residue polypeptide: Phosphoglucosamine mutase (446 aa).

The active-site Phosphoserine intermediate is the Ser-99. The Mg(2+) site is built by Ser-99, Asp-242, Asp-244, and Asp-246. At Ser-99 the chain carries Phosphoserine.

Belongs to the phosphohexose mutase family. Mg(2+) serves as cofactor. In terms of processing, activated by phosphorylation.

It carries out the reaction alpha-D-glucosamine 1-phosphate = D-glucosamine 6-phosphate. In terms of biological role, catalyzes the conversion of glucosamine-6-phosphate to glucosamine-1-phosphate. This is Phosphoglucosamine mutase from Campylobacter concisus (strain 13826).